Here is a 268-residue protein sequence, read N- to C-terminus: Thiazole synthase (268 aa).

K100 functions as the Schiff-base intermediate with DXP in the catalytic mechanism. 1-deoxy-D-xylulose 5-phosphate-binding positions include G161, 187–188, and 209–210; these read AG and NT. The interval 248-268 is disordered; the sequence is ATPSSPSEGMITGSPHSAANN.

This sequence belongs to the ThiG family. In terms of assembly, homotetramer. Forms heterodimers with either ThiH or ThiS.

The protein resides in the cytoplasm. The catalysed reaction is [ThiS sulfur-carrier protein]-C-terminal-Gly-aminoethanethioate + 2-iminoacetate + 1-deoxy-D-xylulose 5-phosphate = [ThiS sulfur-carrier protein]-C-terminal Gly-Gly + 2-[(2R,5Z)-2-carboxy-4-methylthiazol-5(2H)-ylidene]ethyl phosphate + 2 H2O + H(+). The protein operates within cofactor biosynthesis; thiamine diphosphate biosynthesis. Functionally, catalyzes the rearrangement of 1-deoxy-D-xylulose 5-phosphate (DXP) to produce the thiazole phosphate moiety of thiamine. Sulfur is provided by the thiocarboxylate moiety of the carrier protein ThiS. In vitro, sulfur can be provided by H(2)S. The sequence is that of Thiazole synthase from Nitrosomonas eutropha (strain DSM 101675 / C91 / Nm57).